Reading from the N-terminus, the 266-residue chain is 3-methyl-2-oxobutanoate hydroxymethyltransferase (266 aa).

Residues Asp-45 and Asp-84 each coordinate Mg(2+). 3-methyl-2-oxobutanoate is bound by residues 45–46 (DS), Asp-84, and Lys-113. Position 115 (Glu-115) interacts with Mg(2+). Glu-183 (proton acceptor) is an active-site residue.

The protein belongs to the PanB family. Homodecamer; pentamer of dimers. It depends on Mg(2+) as a cofactor.

The protein resides in the cytoplasm. It carries out the reaction 3-methyl-2-oxobutanoate + (6R)-5,10-methylene-5,6,7,8-tetrahydrofolate + H2O = 2-dehydropantoate + (6S)-5,6,7,8-tetrahydrofolate. Its pathway is cofactor biosynthesis; (R)-pantothenate biosynthesis; (R)-pantoate from 3-methyl-2-oxobutanoate: step 1/2. Functionally, catalyzes the reversible reaction in which hydroxymethyl group from 5,10-methylenetetrahydrofolate is transferred onto alpha-ketoisovalerate to form ketopantoate. The polypeptide is 3-methyl-2-oxobutanoate hydroxymethyltransferase (Coxiella burnetii (strain CbuK_Q154) (Coxiella burnetii (strain Q154))).